A 1241-amino-acid chain; its full sequence is eIF-2-alpha kinase GCN2 (1241 aa).

Over residues 1 to 15 the composition is skewed to basic residues; sequence MGRSSSKKKKKRGGS. Residues 1–33 are disordered; that stretch reads MGRSSSKKKKKRGGSGRRGQLKDHGSNADEDNE. In terms of domain architecture, RWD spans 37–148; it reads EEITALSAIF…EAAQEFLSEI (112 aa). Positions 253 to 321 are disordered; sequence PIAKLNTVQE…SLGSWSSDSL (69 aa). Low complexity-rich tracts occupy residues 267-276 and 307-321; these read DTSISSFDSS and NSESESLGSWSSDSL. The Protein kinase domain maps to 425–731; the sequence is FEELKPLGQG…ATELLKHAFP (307 aa). Residues 431–439 and lysine 454 contribute to the ATP site; that span reads LGQGGFGHV. The active-site Proton acceptor is the aspartate 586. The histidyl-tRNA synthetase-like stretch occupies residues 819-1219; sequence IPMRLLSDCP…ELKKEKVVGR (401 aa).

The protein belongs to the protein kinase superfamily. Ser/Thr protein kinase family. GCN2 subfamily. In terms of assembly, homodimer; homodimerization is important for kinase activation by uncharged tRNAs. In terms of tissue distribution, expressed in roots, leaves, stems, buds, flowers, siliques and seedlings.

The protein localises to the cytoplasm. The catalysed reaction is L-seryl-[protein] + ATP = O-phospho-L-seryl-[protein] + ADP + H(+). It catalyses the reaction L-threonyl-[protein] + ATP = O-phospho-L-threonyl-[protein] + ADP + H(+). Its activity is regulated as follows. The kinase activity is stimulated upon binding to uncharged tRNAs. Functionally, metabolic-stress sensing protein kinase that phosphorylates the alpha subunit of eukaryotic translation initiation factor 2 eIF-2-alpha in response to low amino acid availability. Plays a role as an activator of the general amino acid control pathway required for adapatation to amino acid starvation. Converts phosphorylated eIF-2-alpha either to a competitive inhibitor of translation initiation, leading to a global protein synthesis repression, and thus to a reduced overall utilization of amino acids, or to a translational initiation activation of specific mRNAs, and hence allowing reprogramming of amino acid biosynthetic gene expression to alleviate nutrient depletion. Binds uncharged tRNAs. In Arabidopsis thaliana (Mouse-ear cress), this protein is eIF-2-alpha kinase GCN2.